The primary structure comprises 478 residues: Alpha-(1,3)-fucosyltransferase FucT (478 aa).

Substrate-binding positions include Gly94, 186–189 (VASN), Arg195, 222–225 (VKNK), Asn240, and 246–250 (YVTEK). The important for acceptor specificity stretch occupies residues 347 to 353 (DNPFIFC). A run of 10 repeats spans residues 364-370 (DDLRVNY), 371-377 (DDLRVNY), 378-384 (DDLRINY), 385-391 (DDLRVNY), 392-398 (DDLRINY), 399-405 (DDLRVNY), 406-412 (DDLRVNY), 413-419 (DDLRINY), 420-426 (DDLRVNY), and 427-433 (DDLRVNY). Positions 364-433 (DDLRVNYDDL…VNYDDLRVNY (70 aa)) are 10 X 7 AA tandem repeat of D-D-L-R-[IV]-N-Y. Residues 434–478 (ERLLSKATPLLELSQNTTSKIYRKAYQKSLPLLRAIRRWVKKLGL) are may be involved in membrane binding.

The protein belongs to the glycosyltransferase 10 family. Homodimer.

The protein resides in the membrane. It is found in the cytoplasm. It carries out the reaction a beta-D-galactosyl-(1-&gt;4)-N-acetyl-beta-D-glucosaminyl derivative + GDP-beta-L-fucose = a beta-D-galactosyl-(1-&gt;4)-[alpha-L-fucosyl-(1-&gt;3)]-N-acetyl-beta-D-glucosaminyl derivative + GDP + H(+). It functions in the pathway lipopolysaccharide biosynthesis; LPS oligosaccharide biosynthesis. Involved in the biosynthesis of the Lewis X (LeX) trisaccharide of the lipopolysaccharide (LPS) O-antigen. Catalyzes the addition of fucose in alpha 1-3 linkage to Gal-beta-1-4-GlcNAc-beta-O-R (LacNAc-R) type II acceptor. This is Alpha-(1,3)-fucosyltransferase FucT from Helicobacter pylori (Campylobacter pylori).